Consider the following 334-residue polypeptide: Protein-methionine-sulfoxide reductase catalytic subunit MsrP (334 aa).

The segment at residues 1–44 (MKKNQFLKESDVTAESVFFMKRRQVLKALGISAAALSLPHAAHA) is a signal peptide (tat-type signal). Residues Asn88, 91 to 92 (YE), Cys146, Thr181, Asn233, Arg238, and 249 to 251 (GIK) contribute to the Mo-molybdopterin site.

It belongs to the MsrP family. As to quaternary structure, heterodimer of a catalytic subunit (MsrP) and a heme-binding subunit (MsrQ). The cofactor is Mo-molybdopterin. In terms of processing, predicted to be exported by the Tat system. The position of the signal peptide cleavage has not been experimentally proven.

It localises to the periplasm. It catalyses the reaction L-methionyl-[protein] + a quinone + H2O = L-methionyl-(S)-S-oxide-[protein] + a quinol. The catalysed reaction is L-methionyl-[protein] + a quinone + H2O = L-methionyl-(R)-S-oxide-[protein] + a quinol. Part of the MsrPQ system that repairs oxidized periplasmic proteins containing methionine sulfoxide residues (Met-O), using respiratory chain electrons. Thus protects these proteins from oxidative-stress damage caused by reactive species of oxygen and chlorine generated by the host defense mechanisms. MsrPQ is essential for the maintenance of envelope integrity under bleach stress, rescuing a wide series of structurally unrelated periplasmic proteins from methionine oxidation, including the primary periplasmic chaperone SurA and the lipoprotein Pal. The catalytic subunit MsrP is non-stereospecific, being able to reduce both (R-) and (S-) diastereoisomers of methionine sulfoxide. The chain is Protein-methionine-sulfoxide reductase catalytic subunit MsrP from Escherichia coli O157:H7.